Consider the following 483-residue polypeptide: MTFAANFSLVLPEVILGVSALVLLVWGAFQRKTSPLFTGAAVLALLGAAVAAVVGPHGHAFNGVYAADAAATYAKVAIYLSSAVAIVLGDRWLAVRGDQKFEYAVLVILAAVGMGVTASAGDLISLYIGVELQSLALYVLAAFRRDDAKSSEAGLKYFVLGALSSGLLLYGASLIYGFAGSTRFADIAAVGAAAAHGTHGVGLLFGLVFLICGLAFKVSAAPFHMWTPDVYEGAPTSVVGFFAAAPKLAAMMMFARVLGDAFPDSVAQWRQVLIIASLASVFVGAFAGLAQTNLKRLWAYSSIANVGYALLGVATGGETGLHSMLLFMTLYMVDVTGFFACLQALSRDGKPMETIEDMAGLVKERPGIAVAMTAFSLSALGMPPFSGFWAKFYVFGAAMGSGDVLLQWAAVLGLVGSVVAAFYYLRLIKAMWFDAPAGAVDKPQPTARAVGFAAALFSFPVVMVALIWLDPAARAAAAAFGHA.

Transmembrane regions (helical) follow at residues 9-29 (LVLP…WGAF), 35-55 (PLFT…AVVG), 69-89 (AAAT…IVLG), 104-124 (AVLV…GDLI), 158-178 (FVLG…IYGF), 201-221 (VGLL…VSAA), 234-254 (APTS…MMMF), 272-292 (VLII…LAQT), 297-317 (LWAY…ATGG), 325-345 (LLFM…LQAL), 368-388 (IAVA…FSGF), 404-424 (VLLQ…AFYY), and 449-469 (AVGF…LIWL).

Belongs to the complex I subunit 2 family. In terms of assembly, NDH-1 is composed of 14 different subunits. Subunits NuoA, H, J, K, L, M, N constitute the membrane sector of the complex.

It is found in the cell inner membrane. The enzyme catalyses a quinone + NADH + 5 H(+)(in) = a quinol + NAD(+) + 4 H(+)(out). Its function is as follows. NDH-1 shuttles electrons from NADH, via FMN and iron-sulfur (Fe-S) centers, to quinones in the respiratory chain. The immediate electron acceptor for the enzyme in this species is believed to be ubiquinone. Couples the redox reaction to proton translocation (for every two electrons transferred, four hydrogen ions are translocated across the cytoplasmic membrane), and thus conserves the redox energy in a proton gradient. The sequence is that of NADH-quinone oxidoreductase subunit N from Caulobacter sp. (strain K31).